Reading from the N-terminus, the 167-residue chain is MSTPIRILGIDPGLRHTGWGVIEQSGARLVHIAHGVIDPPTDLSMAERLGHIFEAVGELARHHAPHAAGVEETLVNANPRSALKLGQARGAAMAALAMAGVSVAEFAPRQIKLSVVGTGTADKDQVKFMVQRLLPRAGEMKLDAADALACAICAAHHLPLQMKRGAA.

Residues Asp11, Glu71, and Asp143 contribute to the active site. Mg(2+) is bound by residues Asp11, Glu71, and Asp143.

It belongs to the RuvC family. In terms of assembly, homodimer which binds Holliday junction (HJ) DNA. The HJ becomes 2-fold symmetrical on binding to RuvC with unstacked arms; it has a different conformation from HJ DNA in complex with RuvA. In the full resolvosome a probable DNA-RuvA(4)-RuvB(12)-RuvC(2) complex forms which resolves the HJ. Mg(2+) serves as cofactor.

Its subcellular location is the cytoplasm. It catalyses the reaction Endonucleolytic cleavage at a junction such as a reciprocal single-stranded crossover between two homologous DNA duplexes (Holliday junction).. Functionally, the RuvA-RuvB-RuvC complex processes Holliday junction (HJ) DNA during genetic recombination and DNA repair. Endonuclease that resolves HJ intermediates. Cleaves cruciform DNA by making single-stranded nicks across the HJ at symmetrical positions within the homologous arms, yielding a 5'-phosphate and a 3'-hydroxyl group; requires a central core of homology in the junction. The consensus cleavage sequence is 5'-(A/T)TT(C/G)-3'. Cleavage occurs on the 3'-side of the TT dinucleotide at the point of strand exchange. HJ branch migration catalyzed by RuvA-RuvB allows RuvC to scan DNA until it finds its consensus sequence, where it cleaves and resolves the cruciform DNA. This is Crossover junction endodeoxyribonuclease RuvC from Hyphomonas neptunium (strain ATCC 15444).